We begin with the raw amino-acid sequence, 217 residues long: Eukaryotic translation initiation factor 4E (217 aa).

Residues 1 to 11 (MATVEPETTPT) show a composition bias toward low complexity. The disordered stretch occupies residues 1–27 (MATVEPETTPTTNPPPAEEEKTESNQE). At Ala-2 the chain carries N-acetylalanine. Phosphothreonine is present on Thr-22. The segment at 37-40 (HPLQ) is EIF4EBP1/2/3 binding. Residue 56-57 (WQ) coordinates mRNA. An EIF4EBP1/2/3 binding region spans residues 73-77 (WALYN). 102–103 (WE) contributes to the mRNA binding site. Residues 132-139 (ETLLCLIG) form an EIF4EBP1/2/3 binding region. MRNA contacts are provided by residues 157-162 (RAKGDK) and 205-207 (TKS). At Ser-209 the chain carries Phosphoserine; by PKC and MKNK2.

This sequence belongs to the eukaryotic initiation factor 4E family. As to quaternary structure, eIF4F is a multi-subunit complex, the composition of which varies with external and internal environmental conditions. It is composed of at least EIF4A, EIF4E and EIF4G1/EIF4G3. EIF4E is also known to interact with other partners. Interacts with EIF4ENIF1/4E-T; promotes recruitment to P-bodies and import into the nucleus. Hypophosphorylated EIF4EBP1, EIF4EBP2 and EIF4EBP3 compete with EIF4G1/EIF4G3 to interact with EIF4E; insulin stimulated MAP-kinase (MAPK1 and MAPK3) phosphorylation of EIF4EBP1 causes dissociation of the complex allowing EIF4G1/EIF4G3 to bind and consequent initiation of translation. Interacts mutually exclusive with EIF4A1 or EIF4A2. Interacts with NGDN and PIWIL2. Component of the CYFIP1-EIF4E-FMR1 complex composed of CYFIP, EIF4E and FMR1. Interacts directly with CYFIP1. Interacts with CLOCK. Binds to MKNK2 in nucleus. Interacts with LIMD1, WTIP and AJUBA. Interacts with APOBEC3G in an RNA-dependent manner. Interacts with LARP1. Interacts with METTL3. Interacts with RBM24; this interaction prevents EIF4E from binding to p53/TP53 mRNA and inhibits the assembly of translation initiation complex. Interacts with DDX3X; interaction is direct and in an RNA-independent manner; this interaction enhances EIF4E cap-binding ability and is required for the repression of cap-dependent translation and the increase of IRES-mediated translation. DDX3X competes with EIF4G1 for interaction with EIF4E. Interacts with EIF4G1; which in a mutual exclusive interaction associates either with EIF1 or with EIF4E on a common binding site. Interacts with BTG4 and CNOT7. Interacts with LRPPRC (via N-terminus); the interaction promotes association of EIF4E with 4ESE-containing mRNAs. Interacts with mRNA cleavage enzyme CPSF3 and its cofactor CPSF1. Interacts (via RING-type zinc finger) with PML; the interaction results in conformational changes of both interacting proteins and reduces EIF4E affinity for the 5' m7G cap of mRNA, thus reducing EIF4E-mediated mRNA nuclear export. Interacts with homeobox protein HHEX/PRH; the interaction inhibits EIF4E-mediated mRNA nuclear export. Interacts with homeobox protein HOXA9; the interaction positively regulates EIF4E-mediated mRNA nuclear export. Interacts with homeobox protein EMX2. In terms of assembly, (Microbial infection) Interacts with murine norovirus viral genome-linked protein; this interaction plays a role in translation of viral proteins. In terms of processing, phosphorylation increases the ability of the protein to bind to mRNA caps and to form the eIF4F complex. Phosphorylation also enhances its mRNA transport function. Phosphorylation at Ser-209 is not essential for protein synthesis.

It is found in the cytoplasm. It localises to the P-body. The protein resides in the stress granule. The protein localises to the nucleus. Its subcellular location is the nucleus speckle. It is found in the nuclear body. In terms of biological role, acts in the cytoplasm to initiate and regulate protein synthesis and is required in the nucleus for export of a subset of mRNAs from the nucleus to the cytoplasm which promotes processes such as RNA capping, processing and splicing. Component of the protein complex eIF4F, which is involved in the recognition of the mRNA cap, ATP-dependent unwinding of 5'-terminal secondary structure and recruitment of mRNA to the ribosome. This protein recognizes and binds the 7-methylguanosine (m7G)-containing mRNA cap during an early step in the initiation of protein synthesis and facilitates ribosome binding by inducing the unwinding of the mRNAs secondary structures. Together with EIF4G1, antagonizes the scanning promoted by EIF1-EIF4G1 and is required for TISU translation, a process where the TISU element recognition makes scanning unnecessary. In addition to its role in translation initiation, also acts as a regulator of translation and stability in the cytoplasm. Component of the CYFIP1-EIF4E-FMR1 complex which binds to the mRNA cap and mediates translational repression: in the complex, EIF4E mediates the binding to the mRNA cap. Component of a multiprotein complex that sequesters and represses translation of proneurogenic factors during neurogenesis. In P-bodies, component of a complex that mediates the storage of translationally inactive mRNAs in the cytoplasm and prevents their degradation. May play an important role in spermatogenesis through translational regulation of stage-specific mRNAs during germ cell development. As well as its roles in translation, also involved in mRNA nucleocytoplasmic transport. Its role in mRNA export from the nucleus to the cytoplasm relies on its ability to bind the m7G cap of RNAs and on the presence of the 50-nucleotide EIF4E sensitivity element (4ESE) in the 3'UTR of sensitive transcripts. Interaction with the 4ESE is mediated by LRPPRC which binds simultaneously to both EIF4E and the 4ESE, thereby acting as a platform for assembly for the RNA export complex. EIF4E-dependent mRNA export is independent of ongoing protein or RNA synthesis and is also NFX1-independent but is XPO1-dependent with LRPPRC interacting with XPO1 to form an EIF4E-dependent mRNA export complex. Alters the composition of the cytoplasmic face of the nuclear pore to promote RNA export by reducing RANBP2 expression, relocalizing nucleoporin NUP214 and increasing expression of RANBP1 and RNA export factors DDX19 and GLE1. Promotes the nuclear export of cyclin CCND1 mRNA. Promotes the nuclear export of NOS2/iNOS mRNA. Promotes the nuclear export of MDM2 mRNA. Also promotes the export of additional mRNAs, including others involved in the cell cycle. In the nucleus, binds to capped splice factor-encoding mRNAs and stimulates their nuclear export to enhance splice factor production by increasing their cytoplasmic availability to the translation machinery. May also regulate splicing through interaction with the spliceosome in an RNA and m7G cap-dependent manner. Also binds to some pre-mRNAs and may play a role in their recruitment to the spliceosome. Promotes steady-state capping of a subset of coding and non-coding RNAs by mediating nuclear export of capping machinery mRNAs including RNMT, RNGTT and RAMAC to enhance their translation. Stimulates mRNA 3'-end processing by promoting the expression of several core cleavage complex factors required for mRNA cleavage and polyadenylation, and may also have a direct effect through its interaction with the CPSF3 cleavage enzyme. Rescues cells from apoptosis by promoting activation of serine/threonine-protein kinase AKT1 through mRNA export of NBS1 which potentiates AKT1 phosphorylation and also through mRNA export of AKT1 effectors, allowing for increased production of these proteins. This Mus musculus (Mouse) protein is Eukaryotic translation initiation factor 4E.